We begin with the raw amino-acid sequence, 409 residues long: MSLHAWEWEEDPASIEPISSITSFYQSTSECDVEEHLKAKARAQESDSDRPCSSIESSSEPASTFSSDVPHVVPCKFTISLAFPVNMGQKGKYASLIEKYKKHPKTDSSVTKMRRFYHIEYFLLPDDEEPKKVDILLFPMVAKVFLESGVKTVKPWHEGDKAWVSWEQTFNITVTKELLKKINFHKITLRLWNTKDKMSRKVRYYRLKTAGFTDDVGAFHKSEVRHLVLNQRKLSEQGIENTNIVREESNQEHPPGKQEKTEKHPKSLQGSHQAEPETSSKNSEEYEKSLKMDDSSTIQWSVSRTPTISLAGASMMEIKELIESESLSSLTNILDRQRSQIKGKDSEGRRKIQRRHKKPLAEEEADPTLTGPRKQSAFSIQLAVMPLLAGTHCLPCSQQLLLVLWPERP.

Over residues 36 to 50 the composition is skewed to basic and acidic residues; the sequence is HLKAKARAQESDSDR. Disordered regions lie at residues 36–67, 239–298, and 338–373; these read HLKA…TFSS, IENT…SSTI, and RSQI…TGPR. A compositionally biased stretch (low complexity) spans 51–67; that stretch reads PCSSIESSSEPASTFSS. Residues 245–265 are compositionally biased toward basic and acidic residues; it reads VREESNQEHPPGKQEKTEKHP. The span at 268–281 shows a compositional bias: polar residues; it reads LQGSHQAEPETSSK. Basic and acidic residues-rich tracts occupy residues 282–294 and 338–350; these read NSEE…KMDD and RSQI…EGRR.

This is an uncharacterized protein from Homo sapiens (Human).